The sequence spans 131 residues: Glycine cleavage system H protein (131 aa).

A Lipoyl-binding domain is found at 24 to 106 (RVTVGISDHA…YGEGWIFVVE (83 aa)). The residue at position 65 (Lys-65) is an N6-lipoyllysine.

This sequence belongs to the GcvH family. As to quaternary structure, the glycine cleavage system is composed of four proteins: P, T, L and H. It depends on (R)-lipoate as a cofactor.

In terms of biological role, the glycine cleavage system catalyzes the degradation of glycine. The H protein shuttles the methylamine group of glycine from the P protein to the T protein. This Xanthomonas oryzae pv. oryzae (strain MAFF 311018) protein is Glycine cleavage system H protein.